Reading from the N-terminus, the 462-residue chain is Protein phosphatase 1M (462 aa).

Positions methionine 1–phenylalanine 10 are enriched in basic residues. The tract at residues methionine 1 to threonine 66 is disordered. The PPM-type phosphatase domain maps to glutamate 100 to leucine 452. Residues aspartate 127 and glycine 128 each contribute to the Mn(2+) site.

Belongs to the PP2C family. The cofactor is Mg(2+). Requires Mn(2+) as cofactor. As to expression, widely expressed with highest levels in testis and lower levels in lung, kidney and brain.

It is found in the nucleus. The enzyme catalyses O-phospho-L-seryl-[protein] + H2O = L-seryl-[protein] + phosphate. It carries out the reaction O-phospho-L-threonyl-[protein] + H2O = L-threonyl-[protein] + phosphate. The polypeptide is Protein phosphatase 1M (Mus musculus (Mouse)).